The chain runs to 353 residues: uncharacterized protein (353 aa).

An N-terminal signal peptide occupies residues 1-24 (MRVVKRIAVACYLGITIFSGIAFG).

This sequence belongs to the chlamydial CPn_1058/CT_355/TC_0634 family.

This is an uncharacterized protein from Chlamydia muridarum (strain MoPn / Nigg).